The following is an 852-amino-acid chain: Envelope glycoprotein gp160 (852 aa).

The N-terminal stretch at 1-31 is a signal peptide; that stretch reads MRARETRKNYQCLWRWGTMLLGMLMICSAAE. The Extracellular segment spans residues 32 to 680; the sequence is NLWVTVYYGV…ITNWLWYIRI (649 aa). Cysteines 53 and 73 form a disulfide. N87, N129, N136, N141, N142, N155, N159, N189, and N198 each carry an N-linked (GlcNAc...) asparagine; by host glycan. Intrachain disulfides connect C118–C206, C125–C197, C130–C156, C219–C248, and C229–C240. A V1 region spans residues 130–155; sequence CTDYLGNATNTNNSSGGTVEKEEIKN. A V2 region spans residues 156 to 197; that stretch reads CSFNITTGIRDKVQKAYAYFYKLDVVPIDDDNTNTSYRLIHC. N-linked (GlcNAc...) asparagine; by host glycosylation is found at N242, N263, N277, N290, and N296. Positions 297 to 330 are V3; the sequence is CTRPNNNRRRRITSGPGKVLYTTGEIIGDIRKAY. C297 and C331 are oxidised to a cystine. 3 N-linked (GlcNAc...) asparagine; by host glycosylation sites follow: N332, N339, and N355. A CD4-binding loop region spans residues 363-373; sequence SSGGDPEIVMH. 2 disulfides stabilise this stretch: C377/C439 and C384/C412. The V4 stretch occupies residues 384-412; it reads CNTTKLFNSTWNENSTWNATGNDTITLPC. Residues N385, N391, N397, N401, N405, N442, and N457 are each glycosylated (N-linked (GlcNAc...) asparagine; by host). 2 V5 regions span residues 455–466 and 457–466; these read DKNSTTEIFRPA and NSTTEIFRPA. The fusion peptide stretch occupies residues 507–528; it reads AVGVIGAMFLGFLGAAGSTMGA. Positions 570–588 are immunosuppression; it reads KQLQARVLAVERYLRDQQL. Residues C594 and C600 are joined by a disulfide bond. 4 N-linked (GlcNAc...) asparagine; by host glycosylation sites follow: N607, N612, N621, and N633. Positions 629–663 form a coiled coil; the sequence is REIDNYTSLIYTLLEESQNQQEKNEQELLELDKWA. Residues 658–679 are MPER; binding to GalCer; sequence ELDKWASLWNWFSITNWLWYIR. Residues 681 to 701 traverse the membrane as a helical segment; that stretch reads FIMIVGGLIGLRIIFAVLSIV. Residues 702-852 lie on the Cytoplasmic side of the membrane; the sequence is NRVRQGYSPL…IRQGFERALL (151 aa). The YXXL motif; contains endocytosis signal signature appears at 708–711; the sequence is YSPL. Residues 717-739 form a disordered region; that stretch reads IPAQRGPDRPEGIEEGGGERDRD. The segment covering 722–739 has biased composition (basic and acidic residues); the sequence is GPDRPEGIEEGGGERDRD. C760 is lipidated: S-palmitoyl cysteine; by host. A Di-leucine internalization motif motif is present at residues 851 to 852; sequence LL.

It belongs to the HIV-1 env protein family. As to quaternary structure, the mature envelope protein (Env) consists of a homotrimer of non-covalently associated gp120-gp41 heterodimers. The resulting complex protrudes from the virus surface as a spike. There seems to be as few as 10 spikes on the average virion. Interacts with host CD4, CCR5 and CXCR4. Gp120 also interacts with the C-type lectins CD209/DC-SIGN and CLEC4M/DC-SIGNR (collectively referred to as DC-SIGN(R)). Gp120 and gp41 interact with GalCer. Gp120 interacts with host ITGA4/ITGB7 complex; on CD4+ T-cells, this interaction results in rapid activation of integrin ITGAL/LFA-1, which facilitates efficient cell-to-cell spreading of HIV-1. Gp120 interacts with cell-associated heparan sulfate; this interaction increases virus infectivity on permissive cells and may be involved in infection of CD4- cells. The mature envelope protein (Env) consists of a homotrimer of non-covalently associated gp120-gp41 heterodimers. The resulting complex protrudes from the virus surface as a spike. There seems to be as few as 10 spikes on the average virion. Highly glycosylated by host. The high number of glycan on the protein is reffered to as 'glycan shield' because it contributes to hide protein sequence from adaptive immune system. In terms of processing, palmitoylation of the transmembrane protein and of Env polyprotein (prior to its proteolytic cleavage) is essential for their association with host cell membrane lipid rafts. Palmitoylation is therefore required for envelope trafficking to classical lipid rafts, but not for viral replication. Post-translationally, specific enzymatic cleavages in vivo yield mature proteins. Envelope glycoproteins are synthesized as an inactive precursor that is heavily N-glycosylated and processed likely by host cell furin in the Golgi to yield the mature SU and TM proteins. The cleavage site between SU and TM requires the minimal sequence [KR]-X-[KR]-R. About 2 of the 9 disulfide bonds of gp41 are reduced by P4HB/PDI, following binding to CD4 receptor.

The protein localises to the virion membrane. The protein resides in the host cell membrane. It localises to the host endosome membrane. Functionally, oligomerizes in the host endoplasmic reticulum into predominantly trimers. In a second time, gp160 transits in the host Golgi, where glycosylation is completed. The precursor is then proteolytically cleaved in the trans-Golgi and thereby activated by cellular furin or furin-like proteases to produce gp120 and gp41. In terms of biological role, attaches the virus to the host lymphoid cell by binding to the primary receptor CD4. This interaction induces a structural rearrangement creating a high affinity binding site for a chemokine coreceptor like CXCR4 and/or CCR5. Acts as a ligand for CD209/DC-SIGN and CLEC4M/DC-SIGNR, which are respectively found on dendritic cells (DCs), and on endothelial cells of liver sinusoids and lymph node sinuses. These interactions allow capture of viral particles at mucosal surfaces by these cells and subsequent transmission to permissive cells. HIV subverts the migration properties of dendritic cells to gain access to CD4+ T-cells in lymph nodes. Virus transmission to permissive T-cells occurs either in trans (without DCs infection, through viral capture and transmission), or in cis (following DCs productive infection, through the usual CD4-gp120 interaction), thereby inducing a robust infection. In trans infection, bound virions remain infectious over days and it is proposed that they are not degraded, but protected in non-lysosomal acidic organelles within the DCs close to the cell membrane thus contributing to the viral infectious potential during DCs' migration from the periphery to the lymphoid tissues. On arrival at lymphoid tissues, intact virions recycle back to DCs' cell surface allowing virus transmission to CD4+ T-cells. Its function is as follows. Acts as a class I viral fusion protein. Under the current model, the protein has at least 3 conformational states: pre-fusion native state, pre-hairpin intermediate state, and post-fusion hairpin state. During fusion of viral and target intracellular membranes, the coiled coil regions (heptad repeats) assume a trimer-of-hairpins structure, positioning the fusion peptide in close proximity to the C-terminal region of the ectodomain. The formation of this structure appears to drive apposition and subsequent fusion of viral and target cell membranes. Complete fusion occurs in host cell endosomes and is dynamin-dependent, however some lipid transfer might occur at the plasma membrane. The virus undergoes clathrin-dependent internalization long before endosomal fusion, thus minimizing the surface exposure of conserved viral epitopes during fusion and reducing the efficacy of inhibitors targeting these epitopes. Membranes fusion leads to delivery of the nucleocapsid into the cytoplasm. In Human immunodeficiency virus type 1 group M subtype B (isolate SF33) (HIV-1), this protein is Envelope glycoprotein gp160.